The following is a 154-amino-acid chain: Superoxide dismutase [Cu-Zn] (154 aa).

Cu cation is bound by residues His-47, His-49, and His-64. Residues Cys-58 and Cys-147 are joined by a disulfide bond. The interval 62–89 (GPHFNPFKKNHGGPTDSERHVGDLGNVK) is disordered. Residues His-64, His-72, His-81, and Asp-84 each coordinate Zn(2+). Residue His-121 participates in Cu cation binding. Position 144 (Arg-144) interacts with substrate.

The protein belongs to the Cu-Zn superoxide dismutase family. Homodimer. It depends on Cu cation as a cofactor. Zn(2+) is required as a cofactor.

The protein resides in the cytoplasm. It carries out the reaction 2 superoxide + 2 H(+) = H2O2 + O2. Its function is as follows. Destroys radicals which are normally produced within the cells and which are toxic to biological systems. The sequence is that of Superoxide dismutase [Cu-Zn] (SOD1) from Yarrowia lipolytica (strain CLIB 122 / E 150) (Yeast).